A 371-amino-acid chain; its full sequence is Carbamoyl phosphate synthase small chain (371 aa).

Positions 1–190 are CPSase; that stretch reads MRKTAILALE…LYRENEKPLV (190 aa). L-glutamine contacts are provided by S47, G237, and G239. The 183-residue stretch at 189–371 folds into the Glutamine amidotransferase type-1 domain; that stretch reads LVAVIDFGVK…FKEFVKMAQG (183 aa). C264 functions as the Nucleophile in the catalytic mechanism. 4 residues coordinate L-glutamine: L265, Q268, N306, and F309. Residues H348 and E350 contribute to the active site.

This sequence belongs to the CarA family. In terms of assembly, composed of two chains; the small (or glutamine) chain promotes the hydrolysis of glutamine to ammonia, which is used by the large (or ammonia) chain to synthesize carbamoyl phosphate. Tetramer of heterodimers (alpha,beta)4.

The catalysed reaction is hydrogencarbonate + L-glutamine + 2 ATP + H2O = carbamoyl phosphate + L-glutamate + 2 ADP + phosphate + 2 H(+). It carries out the reaction L-glutamine + H2O = L-glutamate + NH4(+). The protein operates within amino-acid biosynthesis; L-arginine biosynthesis; carbamoyl phosphate from bicarbonate: step 1/1. It participates in pyrimidine metabolism; UMP biosynthesis via de novo pathway; (S)-dihydroorotate from bicarbonate: step 1/3. Its function is as follows. Small subunit of the glutamine-dependent carbamoyl phosphate synthetase (CPSase). CPSase catalyzes the formation of carbamoyl phosphate from the ammonia moiety of glutamine, carbonate, and phosphate donated by ATP, constituting the first step of 2 biosynthetic pathways, one leading to arginine and/or urea and the other to pyrimidine nucleotides. The small subunit (glutamine amidotransferase) binds and cleaves glutamine to supply the large subunit with the substrate ammonia. In Aquifex aeolicus (strain VF5), this protein is Carbamoyl phosphate synthase small chain.